A 598-amino-acid polypeptide reads, in one-letter code: uncharacterized protein (598 aa).

A compositionally biased stretch (low complexity) spans 1-19 (MSVPLRFSTPSSSPSASDN). Disordered stretches follow at residues 1 to 54 (MSVP…MRPK), 139 to 176 (QKNQ…PNWK), and 194 to 279 (EAQL…ITMP). At 1–313 (MSVPLRFSTP…CKIRHFFREG (313 aa)) the chain is on the cytoplasmic side. Polar residues predominate over residues 30–48 (ELDTFNTTDVPRRVNTTKA). The span at 147-165 (RANSRVNSRANSRANSSVS) shows a compositional bias: low complexity. 2 stretches are compositionally biased toward polar residues: residues 218–242 (FSLQ…SSAI) and 255–276 (PRNN…SQDI). The chain crosses the membrane as a helical span at residues 314–334 (FAEFLGTLVLVVFGVGSNLQA). At 335–346 (TVTNGAGGSFES) the chain is on the extracellular side. Residues 347–367 (LSFAWGFGCMLGVYIAGGISG) traverse the membrane as a helical segment. The Cytoplasmic portion of the chain corresponds to 368 to 388 (GHVNPAVTISLAIFRKFPWYK). An NPA 1 motif is present at residues 371–373 (NPA). Residues 389-409 (VPIYIFFQIWGAFFGGALAYG) traverse the membrane as a helical segment. The Extracellular portion of the chain corresponds to 410-444 (YHWSSITEFEGGKDIRTPATGGCLYTNPKPYVTWR). A helical membrane pass occupies residues 445-465 (NAFFDEFIGTAVLVGCLFAIL). Residues 466–473 (DDTNSPPT) are Cytoplasmic-facing. Residues 474–494 (QGMTAFIVGLLIAAIGMALGY) form a helical membrane-spanning segment. The Extracellular portion of the chain corresponds to 495–532 (QTSFTLNPARDLGPRMFAWWIGYGPHSFHLYHWWWTWG). The NPA 2 motif lies at 501–503 (NPA). A helical transmembrane segment spans residues 533–553 (AWGGTIGGGIAGGLIYDLVIF). The Cytoplasmic segment spans residues 554-598 (TGPESPLNYPDNGFIDKKVHQITAKFEKEEEVENLEKTDSPIENN).

The protein belongs to the MIP/aquaporin (TC 1.A.8) family.

It localises to the membrane. This is an uncharacterized protein from Schizosaccharomyces pombe (strain 972 / ATCC 24843) (Fission yeast).